Consider the following 263-residue polypeptide: MTRRANPAQAALFDEPAVDAADVSFIPLAQQFDALPADWKAVLTPCIAQTNWPELCAFVDGERAAGKPIFPTDVFRALHLTSVDDVRVVILGQDPYHGTGTVDGREIPQAHGLAFSVPAGVRVPPSLRNIYKEIEAEFGCKLPGTSGNLEGWAQQGVLLLNTVLTVEQGQAASHAKRGWERITDCLLEQLARVGHKRVFMLWGSHAQAKRALLSDGHLVLEAPHPSPLSAHRGFLGCGHFKTANDWLAAQRQPTIDWLKPQAA.

Asp94 acts as the Proton acceptor in catalysis.

It belongs to the uracil-DNA glycosylase (UDG) superfamily. UNG family.

It is found in the cytoplasm. The catalysed reaction is Hydrolyzes single-stranded DNA or mismatched double-stranded DNA and polynucleotides, releasing free uracil.. Functionally, excises uracil residues from the DNA which can arise as a result of misincorporation of dUMP residues by DNA polymerase or due to deamination of cytosine. The polypeptide is Uracil-DNA glycosylase (Ralstonia pickettii (strain 12J)).